Here is a 431-residue protein sequence, read N- to C-terminus: Histidinol dehydrogenase (431 aa).

The NAD(+) site is built by Tyr124, Gln187, and Asn210. Ser236, Gln258, and His261 together coordinate substrate. Residues Gln258 and His261 each contribute to the Zn(2+) site. Active-site proton acceptor residues include Glu325 and His326. His326, Asp359, Glu413, and His418 together coordinate substrate. Residue Asp359 participates in Zn(2+) binding. Position 418 (His418) interacts with Zn(2+).

It belongs to the histidinol dehydrogenase family. Zn(2+) serves as cofactor.

The catalysed reaction is L-histidinol + 2 NAD(+) + H2O = L-histidine + 2 NADH + 3 H(+). The protein operates within amino-acid biosynthesis; L-histidine biosynthesis; L-histidine from 5-phospho-alpha-D-ribose 1-diphosphate: step 9/9. In terms of biological role, catalyzes the sequential NAD-dependent oxidations of L-histidinol to L-histidinaldehyde and then to L-histidine. The polypeptide is Histidinol dehydrogenase (Legionella pneumophila (strain Lens)).